The primary structure comprises 549 residues: Glucose-6-phosphate isomerase (549 aa).

Glutamate 355 acts as the Proton donor in catalysis. Active-site residues include histidine 386 and lysine 514.

The protein belongs to the GPI family.

The protein resides in the cytoplasm. The enzyme catalyses alpha-D-glucose 6-phosphate = beta-D-fructose 6-phosphate. Its pathway is carbohydrate biosynthesis; gluconeogenesis. It participates in carbohydrate degradation; glycolysis; D-glyceraldehyde 3-phosphate and glycerone phosphate from D-glucose: step 2/4. Functionally, catalyzes the reversible isomerization of glucose-6-phosphate to fructose-6-phosphate. The polypeptide is Glucose-6-phosphate isomerase (Desulfatibacillum aliphaticivorans).